The sequence spans 795 residues: Lon protease (795 aa).

In terms of domain architecture, Lon N-terminal spans 17-214 (YPLMPLRDIV…KVYKFLQDEI (198 aa)). 370 to 377 (GPPGVGKT) contributes to the ATP binding site. A Lon proteolytic domain is found at 605–787 (KPLVGVATGL…EEVFKIALVR (183 aa)). Residues serine 692 and lysine 735 contribute to the active site.

Belongs to the peptidase S16 family. Homohexamer. Organized in a ring with a central cavity.

The protein localises to the cytoplasm. It carries out the reaction Hydrolysis of proteins in presence of ATP.. Functionally, ATP-dependent serine protease that mediates the selective degradation of mutant and abnormal proteins as well as certain short-lived regulatory proteins. Required for cellular homeostasis and for survival from DNA damage and developmental changes induced by stress. Degrades polypeptides processively to yield small peptide fragments that are 5 to 10 amino acids long. Binds to DNA in a double-stranded, site-specific manner. The sequence is that of Lon protease from Aquifex aeolicus (strain VF5).